Here is a 287-residue protein sequence, read N- to C-terminus: MYRDRGTVNSRPEVVDRKRINDALERPSPSTSRQVNGKGKGTVTAATTTANLIGKQQSNNINHRDSRSASLSKNNTVSDDESDTDSEESDVSGSDGEDTSWISWFCNLRGNEFFCEVDDDYIQDDFNLCGLSSLVPYYEYALDLILDVESSQGEMFTEEQNELIESAAEMLYGLIHARYILTSKGLAAMLDKYKNYDFGRCPRVYCCGQPCLPVGQSDLPRSSTVKIYCPKCEDIYYPRSKYQGNIDGAYFGTTFPHLFLMTYGHLKPAKATQNYVQRVFGFKLHKP.

The tract at residues methionine 1 to glutamate 97 is disordered. The segment covering glutamate 13–glutamate 25 has biased composition (basic and acidic residues). Over residues glycine 41–alanine 50 the composition is skewed to low complexity. Over residues serine 78–glutamate 97 the composition is skewed to acidic residues.

It belongs to the casein kinase 2 subunit beta family. As to quaternary structure, heterotetramer of two catalytic alpha subunits and two regulatory beta subunits. Interacts with CCA1. Interacts with LHY. Phosphorylated by alpha subunit.

The protein localises to the cytoplasm. The protein resides in the cytosol. It localises to the nucleus. Functionally, plays a complex role in regulating the basal catalytic activity of the alpha subunit. The tetrameric holoenzyme CK2, composed of two alpha and two beta subunits, phosphorylates the transcription factor GBFl, resulting in stimulation of its DNA binding activity. CK2 phosphorylates the transcription factor PIF1 after an exposure to light, resulting in a proteasome-dependent degradation of PIF1 and promotion of photomorphogenesis. CK2 phosphorylates translation initiation factors. May participate in the regulation of the initiation of translation. Stimulates the binding of CCA1 to promoters. The protein is Casein kinase II subunit beta-1 (CKB1) of Arabidopsis thaliana (Mouse-ear cress).